Consider the following 432-residue polypeptide: 3-phosphoshikimate 1-carboxyvinyltransferase (432 aa).

3-phosphoshikimate contacts are provided by Lys-23, Ser-24, and Arg-28. Lys-23 lines the phosphoenolpyruvate pocket. The phosphoenolpyruvate site is built by Gly-95 and Arg-123. 4 residues coordinate 3-phosphoshikimate: Ser-167, Gln-169, Asp-317, and Lys-344. Gln-169 is a binding site for phosphoenolpyruvate. The active-site Proton acceptor is Asp-317. 2 residues coordinate phosphoenolpyruvate: Arg-348 and Arg-390.

Belongs to the EPSP synthase family. Monomer.

The protein localises to the cytoplasm. It carries out the reaction 3-phosphoshikimate + phosphoenolpyruvate = 5-O-(1-carboxyvinyl)-3-phosphoshikimate + phosphate. It participates in metabolic intermediate biosynthesis; chorismate biosynthesis; chorismate from D-erythrose 4-phosphate and phosphoenolpyruvate: step 6/7. Functionally, catalyzes the transfer of the enolpyruvyl moiety of phosphoenolpyruvate (PEP) to the 5-hydroxyl of shikimate-3-phosphate (S3P) to produce enolpyruvyl shikimate-3-phosphate and inorganic phosphate. This is 3-phosphoshikimate 1-carboxyvinyltransferase from Staphylococcus aureus (strain N315).